The sequence spans 352 residues: Endophilin-A1 (352 aa).

Positions 1–21 (MSVAGLKKQFHKATQKVSEKV) are membrane-binding amphipathic helix. The tract at residues 1–27 (MSVAGLKKQFHKATQKVSEKVGGAEGT) is disordered. The segment at 1-125 (MSVAGLKKQF…EVGEAMRELS (125 aa)) is binds and tubulates liposomes. Positions 18–249 (SEKVGGAEGT…LEERIRQASS (232 aa)) constitute a BAR domain. The tract at residues 60–87 (PNPASRAKLSMINTMSKIRGQEKGPGYP) is required for dimerization upon membrane association. Residues 181-248 (EELRQALEKF…RLEERIRQAS (68 aa)) are a coiled coil. The residue at position 262 (serine 262) is a Phosphoserine. The segment at 264–289 (EFATGDSTQPNGGLSHTGTPKPPGVQ) is disordered. A compositionally biased stretch (polar residues) spans 268-281 (GDSTQPNGGLSHTG). One can recognise an SH3 domain in the interval 290 to 349 (MDQPCCRALYDFEPENEGELGFKEGDIITLTNQIDENWYEGMLHGQSGFFPINYVEILVA). Tyrosine 299 carries the post-translational modification Phosphotyrosine.

This sequence belongs to the endophilin family. Monomer; in cytoplasm. Homodimer; when associated with membranes. Interacts with SYNJ1. Interacts with DNM1. Interacts with MAP4K3; the interaction appears to regulate MAP4K3-mediated JNK activation. Interacts with OPHN1. Interacts with PDCD6IP. Interacts with BIN2. Interacts with ATXN2. Interacts with ADAM9 and ADAM15 cytoplasmic tails. Interacts with TMEM108. Interacts with ADGRB2.

Its subcellular location is the cytoplasm. It localises to the membrane. It is found in the early endosome. The protein resides in the presynapse. In terms of biological role, implicated in synaptic vesicle endocytosis. May recruit other proteins to membranes with high curvature. Required for BDNF-dependent dendrite outgrowth. Cooperates with SH3GL2 to mediate BDNF-NTRK2 early endocytic trafficking and signaling from early endosomes. In Mus musculus (Mouse), this protein is Endophilin-A1 (Sh3gl2).